The following is a 364-amino-acid chain: UDP-N-acetylglucosamine--N-acetylmuramyl-(pentapeptide) pyrophosphoryl-undecaprenol N-acetylglucosamine transferase (364 aa).

UDP-N-acetyl-alpha-D-glucosamine is bound by residues 10-12 (TGG), Asn-128, Arg-170, Ser-199, Ile-250, and Gln-295.

It belongs to the glycosyltransferase 28 family. MurG subfamily.

Its subcellular location is the cell inner membrane. It catalyses the reaction di-trans,octa-cis-undecaprenyl diphospho-N-acetyl-alpha-D-muramoyl-L-alanyl-D-glutamyl-meso-2,6-diaminopimeloyl-D-alanyl-D-alanine + UDP-N-acetyl-alpha-D-glucosamine = di-trans,octa-cis-undecaprenyl diphospho-[N-acetyl-alpha-D-glucosaminyl-(1-&gt;4)]-N-acetyl-alpha-D-muramoyl-L-alanyl-D-glutamyl-meso-2,6-diaminopimeloyl-D-alanyl-D-alanine + UDP + H(+). It participates in cell wall biogenesis; peptidoglycan biosynthesis. In terms of biological role, cell wall formation. Catalyzes the transfer of a GlcNAc subunit on undecaprenyl-pyrophosphoryl-MurNAc-pentapeptide (lipid intermediate I) to form undecaprenyl-pyrophosphoryl-MurNAc-(pentapeptide)GlcNAc (lipid intermediate II). This is UDP-N-acetylglucosamine--N-acetylmuramyl-(pentapeptide) pyrophosphoryl-undecaprenol N-acetylglucosamine transferase from Chlorobium limicola (strain DSM 245 / NBRC 103803 / 6330).